A 311-amino-acid chain; its full sequence is MAFKHKDIIGLQDLTREEIELLLSTAENLKEINSREIKKVPTLRGKTVVNLFYEASTRTRTSFEIAAKRLSADTINITASTSSVTKGETLSDTARNVLAMNPDIIVMRHAVSGAHHYLAKRVSCSVINAGDGAHEHPSQGLLDMLTMRQQFGKLEGLKVAIVGDITHSRVARSDIYGLTRMGANVFLAGPPTMMPPGIERLGNVTVCKDMREAVADADVVMMLRIQLERQGKTLLPTMKEYSRYFGLNQSVLKLAKKDAMVMHPGPINRGVELSSDVADGSQSHILKQVENGVAVRMSMLYHVSGGELPTE.

Residues R58 and T59 each coordinate carbamoyl phosphate. K86 contacts L-aspartate. Carbamoyl phosphate contacts are provided by R108, H136, and Q139. L-aspartate-binding residues include R169 and R224. Carbamoyl phosphate-binding residues include G265 and P266.

The protein belongs to the aspartate/ornithine carbamoyltransferase superfamily. ATCase family. Heterododecamer (2C3:3R2) of six catalytic PyrB chains organized as two trimers (C3), and six regulatory PyrI chains organized as three dimers (R2).

The enzyme catalyses carbamoyl phosphate + L-aspartate = N-carbamoyl-L-aspartate + phosphate + H(+). Its pathway is pyrimidine metabolism; UMP biosynthesis via de novo pathway; (S)-dihydroorotate from bicarbonate: step 2/3. Its function is as follows. Catalyzes the condensation of carbamoyl phosphate and aspartate to form carbamoyl aspartate and inorganic phosphate, the committed step in the de novo pyrimidine nucleotide biosynthesis pathway. The polypeptide is Aspartate carbamoyltransferase catalytic subunit (Geotalea daltonii (strain DSM 22248 / JCM 15807 / FRC-32) (Geobacter daltonii)).